Here is a 459-residue protein sequence, read N- to C-terminus: MSNRFAVILAAGKGTRMKSKLYKVLHPVCGKPMVQHVVDQVSQLGLQKLVTVVGHGAEMVQEQLGNVSEFALQAEQLGTAHAVDQAASVLANEEGTTLVICGDTPLITAETMEALLQQHKEAGAMATVLTAYIEEPAGYGRIVRNENGHVEKIVEHKDANEKELAIKEINTGTYCFDNKALFASLSKVSNDNVQGEYYLPDVIEILKNEGHIVSAYQTEQFDETLGVNDRVALSQAEIIMKNRINRKNMVNGVTIIDPSNTYISADAVIGSDTVLHPGTIIEGNTVIGSDCEIGPHTVIRDSEIGDRTTIRQSTVHDSKLGTEVSVGPFAHIRPDSVIGDEVRVGNFVEIKKTVFGNRSKASHLSYIGDAQVGEDVNLGCGSITVNYDGKNKFKTVIGNGVFIGCNSNLVAPVTVEDGAYVAAGSTITENVPSKALSVARARQVNKEDYVDQLLNKKKS.

A pyrophosphorylase region spans residues 1–230 (MSNRFAVILA…FDETLGVNDR (230 aa)). UDP-N-acetyl-alpha-D-glucosamine-binding positions include 9–12 (LAAG), Lys23, Gln73, and 78–79 (GT). Asp103 contacts Mg(2+). 4 residues coordinate UDP-N-acetyl-alpha-D-glucosamine: Gly140, Glu155, Asn170, and Asn228. Asn228 contributes to the Mg(2+) binding site. The segment at 231-251 (VALSQAEIIMKNRINRKNMVN) is linker. The N-acetyltransferase stretch occupies residues 252-459 (GVTIIDPSNT…VDQLLNKKKS (208 aa)). UDP-N-acetyl-alpha-D-glucosamine-binding residues include Arg333 and Lys351. His363 functions as the Proton acceptor in the catalytic mechanism. Residues Tyr366 and Asn377 each contribute to the UDP-N-acetyl-alpha-D-glucosamine site. Residues 386–387 (NY), Ala423, and Arg440 contribute to the acetyl-CoA site.

The protein in the N-terminal section; belongs to the N-acetylglucosamine-1-phosphate uridyltransferase family. In the C-terminal section; belongs to the transferase hexapeptide repeat family. In terms of assembly, homotrimer. Requires Mg(2+) as cofactor.

The protein resides in the cytoplasm. The catalysed reaction is alpha-D-glucosamine 1-phosphate + acetyl-CoA = N-acetyl-alpha-D-glucosamine 1-phosphate + CoA + H(+). It catalyses the reaction N-acetyl-alpha-D-glucosamine 1-phosphate + UTP + H(+) = UDP-N-acetyl-alpha-D-glucosamine + diphosphate. It participates in nucleotide-sugar biosynthesis; UDP-N-acetyl-alpha-D-glucosamine biosynthesis; N-acetyl-alpha-D-glucosamine 1-phosphate from alpha-D-glucosamine 6-phosphate (route II): step 2/2. It functions in the pathway nucleotide-sugar biosynthesis; UDP-N-acetyl-alpha-D-glucosamine biosynthesis; UDP-N-acetyl-alpha-D-glucosamine from N-acetyl-alpha-D-glucosamine 1-phosphate: step 1/1. The protein operates within bacterial outer membrane biogenesis; LPS lipid A biosynthesis. Catalyzes the last two sequential reactions in the de novo biosynthetic pathway for UDP-N-acetylglucosamine (UDP-GlcNAc). The C-terminal domain catalyzes the transfer of acetyl group from acetyl coenzyme A to glucosamine-1-phosphate (GlcN-1-P) to produce N-acetylglucosamine-1-phosphate (GlcNAc-1-P), which is converted into UDP-GlcNAc by the transfer of uridine 5-monophosphate (from uridine 5-triphosphate), a reaction catalyzed by the N-terminal domain. The chain is Bifunctional protein GlmU from Bacillus cereus (strain ATCC 14579 / DSM 31 / CCUG 7414 / JCM 2152 / NBRC 15305 / NCIMB 9373 / NCTC 2599 / NRRL B-3711).